A 34-amino-acid polypeptide reads, in one-letter code: uncharacterized protein (34 aa).

Residues 10–30 (LIITSSFFAIAAVLVLSVLLI) form a helical membrane-spanning segment.

Its subcellular location is the membrane. This is an uncharacterized protein from Escherichia coli O6:H1 (strain CFT073 / ATCC 700928 / UPEC).